A 271-amino-acid polypeptide reads, in one-letter code: Chymotrypsin-like elastase family member 2A (271 aa).

A signal peptide spans 1–16 (MIRTLLLSALVAGALS). A propeptide spans 17-30 (CGYPTYEVQHDVSR) (activation peptide). Positions 31-269 (VVGGQEASPN…YIDWINSVIA (239 aa)) constitute a Peptidase S1 domain. A disulfide bridge connects residues Cys60 and Cys76. Catalysis depends on charge relay system residues His75 and Asp123. 3 disulfides stabilise this stretch: Cys157–Cys224, Cys188–Cys204, and Cys214–Cys245. Ser218 functions as the Charge relay system in the catalytic mechanism.

Belongs to the peptidase S1 family. Elastase subfamily. In terms of assembly, interacts with CPA1. Interacts with SERPINA1. In terms of tissue distribution, pancreas.

It localises to the secreted. The enzyme catalyses Preferential cleavage: Leu-|-Xaa, Met-|-Xaa and Phe-|-Xaa. Hydrolyzes elastin.. Its function is as follows. Elastase that enhances insulin signaling and might have a physiologic role in cellular glucose metabolism. Circulates in plasma and reduces platelet hyperactivation, triggers both insulin secretion and degradation, and increases insulin sensitivity. The chain is Chymotrypsin-like elastase family member 2A (Cela2a) from Rattus norvegicus (Rat).